The following is a 291-amino-acid chain: Diaminopimelate epimerase (291 aa).

The substrate site is built by N13, Q46, and N66. C75 functions as the Proton donor in the catalytic mechanism. Substrate contacts are provided by residues 76-77, N156, N189, and 207-208; these read GN and ER. The active-site Proton acceptor is the C216. 217 to 218 provides a ligand contact to substrate; it reads GS.

The protein belongs to the diaminopimelate epimerase family. Homodimer.

The protein resides in the cytoplasm. It carries out the reaction (2S,6S)-2,6-diaminopimelate = meso-2,6-diaminopimelate. It functions in the pathway amino-acid biosynthesis; L-lysine biosynthesis via DAP pathway; DL-2,6-diaminopimelate from LL-2,6-diaminopimelate: step 1/1. Its function is as follows. Catalyzes the stereoinversion of LL-2,6-diaminopimelate (L,L-DAP) to meso-diaminopimelate (meso-DAP), a precursor of L-lysine and an essential component of the bacterial peptidoglycan. This is Diaminopimelate epimerase from Rhodospirillum centenum (strain ATCC 51521 / SW).